We begin with the raw amino-acid sequence, 800 residues long: Aldehyde dehydrogenase family 16 member A1 (800 aa).

The protein belongs to the aldehyde dehydrogenase family. Interacts with SPG21.

The protein is Aldehyde dehydrogenase family 16 member A1 (ALDH16A1) of Bos taurus (Bovine).